An 84-amino-acid chain; its full sequence is Small ribosomal subunit protein bS20 (84 aa).

This sequence belongs to the bacterial ribosomal protein bS20 family.

Its function is as follows. Binds directly to 16S ribosomal RNA. This is Small ribosomal subunit protein bS20 from Ligilactobacillus salivarius (strain UCC118) (Lactobacillus salivarius).